The primary structure comprises 448 residues: Exodeoxyribonuclease 7 large subunit (448 aa).

It belongs to the XseA family. Heterooligomer composed of large and small subunits.

The protein resides in the cytoplasm. The catalysed reaction is Exonucleolytic cleavage in either 5'- to 3'- or 3'- to 5'-direction to yield nucleoside 5'-phosphates.. Functionally, bidirectionally degrades single-stranded DNA into large acid-insoluble oligonucleotides, which are then degraded further into small acid-soluble oligonucleotides. The polypeptide is Exodeoxyribonuclease 7 large subunit (Nitrosomonas eutropha (strain DSM 101675 / C91 / Nm57)).